We begin with the raw amino-acid sequence, 105 residues long: Large ribosomal subunit protein eL36 (105 aa).

Positions 1-20 (MAKEAPAKTGLAVGLNKGHK) are disordered.

The protein belongs to the eukaryotic ribosomal protein eL36 family.

The sequence is that of Large ribosomal subunit protein eL36 (rpl36) from Trichoderma hamatum.